The chain runs to 327 residues: Autoinducer 2 import system permease protein LsrD (327 aa).

9 consecutive transmembrane segments (helical) span residues 3–23 (LNWE…FGAI), 41–61 (ICIG…GIDI), 63–83 (LGST…FGLP), 86–106 (LAVP…AALI), 114–134 (LVIT…LSGL), 158–178 (VLGL…FWLI), 211–231 (ALYG…VSYF), 257–277 (IYGG…VGYL), and 283–303 (MVGI…VVVV).

The protein belongs to the binding-protein-dependent transport system permease family. AraH/RbsC subfamily. The complex is composed of two ATP-binding proteins (LsrA), two transmembrane proteins (LsrC and LsrD) and a solute-binding protein (LsrB).

Its subcellular location is the cell inner membrane. Its function is as follows. Part of the ABC transporter complex LsrABCD involved in autoinducer 2 (AI-2) import. Probably responsible for the translocation of the substrate across the membrane. In Enterobacter sp. (strain 638), this protein is Autoinducer 2 import system permease protein LsrD (lsrD).